We begin with the raw amino-acid sequence, 326 residues long: Peroxidase 6 (326 aa).

The first 20 residues, 1–20, serve as a signal peptide directing secretion; sequence MKSFGLCLFILVSSPCLLQA. An N-linked (GlcNAc...) asparagine glycan is attached at Asn21. Intrachain disulfides connect Cys31–Cys112, Cys64–Cys69, Cys118–Cys318, and Cys197–Cys228. The Proton acceptor role is filled by His62. Ca(2+) contacts are provided by Asp63, Val66, Gly68, Asp70, and Ser72. Asn163 carries an N-linked (GlcNAc...) asparagine glycan. His190 is a heme b binding site. Residue Thr191 coordinates Ca(2+). 2 N-linked (GlcNAc...) asparagine glycosylation sites follow: Asn206 and Asn230. Residues Asp242, Thr245, and Asp250 each coordinate Ca(2+). An N-linked (GlcNAc...) asparagine glycan is attached at Asn274.

This sequence belongs to the peroxidase family. Classical plant (class III) peroxidase subfamily. The cofactor is heme b. Requires Ca(2+) as cofactor.

Its subcellular location is the secreted. It catalyses the reaction 2 a phenolic donor + H2O2 = 2 a phenolic radical donor + 2 H2O. Functionally, removal of H(2)O(2), oxidation of toxic reductants, biosynthesis and degradation of lignin, suberization, auxin catabolism, response to environmental stresses such as wounding, pathogen attack and oxidative stress. These functions might be dependent on each isozyme/isoform in each plant tissue. This chain is Peroxidase 6 (PER6), found in Arabidopsis thaliana (Mouse-ear cress).